A 491-amino-acid chain; its full sequence is ATP synthase subunit beta, chloroplastic (491 aa).

Position 172 to 179 (172 to 179 (GGAGVGKT)) interacts with ATP.

This sequence belongs to the ATPase alpha/beta chains family. In terms of assembly, F-type ATPases have 2 components, CF(1) - the catalytic core - and CF(0) - the membrane proton channel. CF(1) has five subunits: alpha(3), beta(3), gamma(1), delta(1), epsilon(1). CF(0) has four main subunits: a(1), b(1), b'(1) and c(9-12).

It is found in the plastid. Its subcellular location is the chloroplast thylakoid membrane. It carries out the reaction ATP + H2O + 4 H(+)(in) = ADP + phosphate + 5 H(+)(out). In terms of biological role, produces ATP from ADP in the presence of a proton gradient across the membrane. The catalytic sites are hosted primarily by the beta subunits. This chain is ATP synthase subunit beta, chloroplastic, found in Pisum sativum (Garden pea).